Here is a 119-residue protein sequence, read N- to C-terminus: NADH dehydrogenase [ubiquinone] 1 subunit C2 (119 aa).

A helical transmembrane segment spans residues 56 to 75 (GLHRQLLYITAFFFAGYYLV).

The protein belongs to the complex I NDUFC2 subunit family. Complex I is composed of 45 different subunits. Interacts with TMEM242.

The protein resides in the mitochondrion inner membrane. Its function is as follows. Accessory subunit of the mitochondrial membrane respiratory chain NADH dehydrogenase (Complex I), that is believed not to be involved in catalysis but required for the complex assembly. Complex I functions in the transfer of electrons from NADH to the respiratory chain. The immediate electron acceptor for the enzyme is believed to be ubiquinone. This is NADH dehydrogenase [ubiquinone] 1 subunit C2 from Gorilla gorilla gorilla (Western lowland gorilla).